Consider the following 138-residue polypeptide: MTAIYLMSMLFGLACGQAMSFCFPTEYTMHVERKECAYCLTINTTICAGYCMTRDINGKLFLPKYALSQDVCTYRDFMYKTVEIPGCPRHVTPYFSYPVAVSCKCGKCNTDYSDCIHEAIKTNYCTKPQKSYVVGFSI.

Positions 1–20 (MTAIYLMSMLFGLACGQAMS) are cleaved as a signal peptide. Cystine bridges form between Cys-22–Cys-72, Cys-36–Cys-87, Cys-39–Cys-125, Cys-47–Cys-103, Cys-51–Cys-105, and Cys-108–Cys-115. Asn-43 is a glycosylation site (N-linked (GlcNAc...) asparagine). The propeptide occupies 133 to 138 (VVGFSI).

It belongs to the glycoprotein hormones subunit beta family. Heterodimer of a common alpha chain and a unique beta chain which confers biological specificity to thyrotropin, lutropin, follitropin and gonadotropin.

Its subcellular location is the secreted. Its function is as follows. Indispensable for the control of thyroid structure and metabolism. This Canis lupus familiaris (Dog) protein is Thyrotropin subunit beta (TSHB).